Consider the following 108-residue polypeptide: U-scoloptoxin(16)-Sm1a (108 aa).

Positions 1-19 are cleaved as a signal peptide; that stretch reads MNLFLVLFVFSFSVSQFFA.

Belongs to the scoloptoxin-16 family. In terms of processing, contains 4 disulfide bonds. As to expression, expressed by the venom gland.

It is found in the secreted. The chain is U-scoloptoxin(16)-Sm1a from Scolopendra morsitans (Tanzanian blue ringleg centipede).